We begin with the raw amino-acid sequence, 100 residues long: Urease subunit gamma (100 aa).

This sequence belongs to the urease gamma subunit family. In terms of assembly, heterotrimer of UreA (gamma), UreB (beta) and UreC (alpha) subunits. Three heterotrimers associate to form the active enzyme.

It is found in the cytoplasm. The catalysed reaction is urea + 2 H2O + H(+) = hydrogencarbonate + 2 NH4(+). It participates in nitrogen metabolism; urea degradation; CO(2) and NH(3) from urea (urease route): step 1/1. This is Urease subunit gamma from Alkalilimnicola ehrlichii (strain ATCC BAA-1101 / DSM 17681 / MLHE-1).